The sequence spans 199 residues: Peptidyl-tRNA hydrolase (199 aa).

Tyrosine 18 provides a ligand contact to tRNA. Histidine 23 serves as the catalytic Proton acceptor. TRNA contacts are provided by tyrosine 72, asparagine 74, and asparagine 120.

Belongs to the PTH family. As to quaternary structure, monomer.

Its subcellular location is the cytoplasm. It carries out the reaction an N-acyl-L-alpha-aminoacyl-tRNA + H2O = an N-acyl-L-amino acid + a tRNA + H(+). Functionally, hydrolyzes ribosome-free peptidyl-tRNAs (with 1 or more amino acids incorporated), which drop off the ribosome during protein synthesis, or as a result of ribosome stalling. Its function is as follows. Catalyzes the release of premature peptidyl moieties from peptidyl-tRNA molecules trapped in stalled 50S ribosomal subunits, and thus maintains levels of free tRNAs and 50S ribosomes. The sequence is that of Peptidyl-tRNA hydrolase from Bifidobacterium animalis subsp. lactis (strain AD011).